The following is a 1159-amino-acid chain: Dynein regulatory complex subunit 7 (1159 aa).

LRR repeat units follow at residues 21–46 (MEARRTYRLNMGYAGLKQLPPGFVEL), 51–74 (NPHITELELSSNDLTDLPDELEEF), 75–97 (RYLRILRLKYNQLKRIPAVVYRL), 99–120 (QLMVFDASGNRIQKVDDAIGHL), 121–143 (SLLKELDVSGNEITTLPESLSTL), 144–166 (PKLEVLQVENNRLELLPESLGEL), 168–189 (GVIKMDLSTNNLRYLPASMGQL), 190–212 (KKVQRIDVGNNLLTKVPPSMGHL), and 214–235 (TLKEFNLRYNHLDDRYKAKVEE). 5 Kelch repeats span residues 309-360 (MLLI…YDEE), 363-413 (RLVV…FWAG), 415-463 (MVLF…IGHG), 465-513 (LLFV…VHRD), and 515-571 (LYLL…LWNG). Positions 827–837 (EDRGMRSRADG) are enriched in basic and acidic residues. The interval 827–857 (EDRGMRSRADGNADESETEGGGGLDDGEGVE) is disordered. A coiled-coil region spans residues 1050-1137 (VRIKAEESEE…RRLRRHEEQA (88 aa)).

It belongs to the DRC7 family. Component of the nexin-dynein regulatory complex (N-DRC). Interacts with DRC5. In terms of processing, phosphorylated.

Its subcellular location is the cell projection. The protein resides in the cilium. The protein localises to the flagellum. It is found in the cytoplasm. It localises to the cytoskeleton. Its subcellular location is the cilium axoneme. The protein resides in the flagellum axoneme. Functionally, component of the nexin-dynein regulatory complex (N-DRC) a key regulator of ciliary/flagellar motility which maintains the alignment and integrity of the distal axoneme and regulates microtubule sliding in motile axonemes. Involved in the regulation of flagellar motility. In Chlamydomonas reinhardtii (Chlamydomonas smithii), this protein is Dynein regulatory complex subunit 7 (DRC7).